The primary structure comprises 415 residues: Methylmalonic aciduria type A homolog, mitochondrial (415 aa).

The N-terminal 62 residues, 1-62, are a transit peptide targeting the mitochondrion; that stretch reads MTISTLLLSP…LLSDGFRRTL (62 aa). Residues 147 to 155, Asp289, and 325 to 327 contribute to the GTP site; these read GPPGAGKST and SAR.

Belongs to the SIMIBI class G3E GTPase family. ArgK/MeaB subfamily. As to quaternary structure, homodimer. Interacts with MMUT (the apoenzyme form); the interaction is GTP dependent.

It localises to the mitochondrion. The protein resides in the cytoplasm. It catalyses the reaction GTP + H2O = GDP + phosphate + H(+). Its activity is regulated as follows. GTPase activity is stimulated by MMUT. In terms of biological role, GTPase, binds and hydrolyzes GTP. Involved in intracellular vitamin B12 metabolism, mediates the transport of cobalamin (Cbl) into mitochondria for the final steps of adenosylcobalamin (AdoCbl) synthesis. Functions as a G-protein chaperone that assists AdoCbl cofactor delivery from MMAB to the methylmalonyl-CoA mutase (MMUT). Plays a dual role as both a protectase and a reactivase for MMUT. Protects MMUT from progressive inactivation by oxidation by decreasing the rate of the formation of the oxidized inactive cofactor hydroxocobalamin (OH2Cbl). Additionally acts a reactivase by promoting the replacement of OH2Cbl by the active cofactor AdoCbl, restoring the activity of MMUT in the presence and hydrolysis of GTP. This chain is Methylmalonic aciduria type A homolog, mitochondrial, found in Mus musculus (Mouse).